Consider the following 261-residue polypeptide: MKTLATIGDNCVDIYPQLNKAFSGGNAVNVAVYCTRYGIQPGCITWVGDDDYGTKLKQDLARMGVDISHVHTKHGVTAQTQVELHDNDRVFGDYTEGVMADFALSEEDYAWLAQYDIVHAAIWGHAEDAFPQLHAAGKLTAFDFSDKWDSPLWQTLVPHLDFAFASAPQEDEALRLKMKAIVARGAGTVIVTLGENGSIAWDGAQFWRQAPEPVTVIDTMGAGDSFIAGFLCGWSAGMTLPQAMAQGTACAAKTIQYHGAW.

This sequence belongs to the carbohydrate kinase PfkB family. Monomer.

It carries out the reaction N(6)-(D-fructosyl)-L-lysine + ATP = N(6)-(6-phospho-D-fructosyl)-L-lysine + ADP + H(+). The protein operates within carbohydrate metabolism; fructoselysine degradation; D-glucose 6-phosphate and lysine from fructoselysine: step 1/2. In terms of biological role, catalyzes the ATP-dependent phosphorylation of fructoselysine to fructoselysine 6-phosphate. May function in a fructoselysine degradation pathway that allows S.flexneri to grow on fructoselysine or psicoselysine. This is Fructoselysine 6-kinase (frlD) from Shigella flexneri.